Reading from the N-terminus, the 194-residue chain is MDFEQLLDKSLNKVREEIKTELSKSLDEAIKLLNEGHTKIIQEYTQRINELITKTKEEIEGEKARLEVENKRTLLVEKEYWINKVYERVLEKIGEVVKTKEYKDAIQSILNKEIKEIEGEKITVYCSPNDKSTVEKVVGNNKNVTIKTDDKMLGGIRIYYEGSGLTRDFSLKLILDQVFDSMRGKISDMLFGGK.

The protein belongs to the V-ATPase E subunit family. Has multiple subunits with at least A(3), B(3), C, D, E, F, H, I and proteolipid K(x).

It localises to the cell membrane. Functionally, component of the A-type ATP synthase that produces ATP from ADP in the presence of a proton gradient across the membrane. The protein is A-type ATP synthase subunit E of Saccharolobus islandicus (strain Y.N.15.51 / Yellowstone #2) (Sulfolobus islandicus).